The primary structure comprises 74 residues: Omega-filistatoxin-Kh1a (74 aa).

Post-translationally, contains 6 disulfide bonds. Expressed by the venom gland.

It localises to the secreted. In terms of biological role, potently blocks vertebrate calcium channels Cav1 and Cav2. Is the most active on Cav2.2/CACNA1B (from HEK) (IC(50)=2.3 nM), followed by Cav2.1/CACNA1A (IC(50)=4.3 nM), Cav2.2/CACNA1B (from oocyte) (IC(50)=14.4 nM), Cav1.2/CACNA1C (IC(50)=26.8 nM), and Cav2.3/CACNA1E (IC(50)=96.4 nM). The protein is Omega-filistatoxin-Kh1a of Kukulcania hibernalis (Southern house spider).